The sequence spans 526 residues: Butyrophilin subfamily 1 member A1 (526 aa).

The N-terminal stretch at Met-1–Ser-26 is a signal peptide. Ig-like V-type domains lie at Ala-27–His-138 and Pro-148–Ser-234. The Extracellular portion of the chain corresponds to Ala-27 to Arg-242. Intrachain disulfides connect Cys-50/Cys-124 and Cys-164/Cys-218. N-linked (GlcNAc...) asparagine glycans are attached at residues Asn-55 and Asn-215. The helical transmembrane segment at Leu-243 to Trp-269 threads the bilayer. Residues Arg-270–Pro-526 lie on the Cytoplasmic side of the membrane. Residues Ser-285–Pro-479 enclose the B30.2/SPRY domain. The disordered stretch occupies residues Ile-495–Pro-526. Residues Ser-504–His-513 show a composition bias toward basic and acidic residues. Positions Ile-517 to Pro-526 are enriched in polar residues.

It belongs to the immunoglobulin superfamily. BTN/MOG family. As to quaternary structure, seems to associate with xanthine dehydrogenase/oxidase. Post-translationally, N-glycosylated.

Its subcellular location is the membrane. It is found in the secreted. May function in the secretion of milk-fat droplets. May act as a specific membrane-associated receptor for the association of cytoplasmic droplets with the apical plasma membrane. Inhibits the proliferation of CD4 and CD8 T-cells activated by anti-CD3 antibodies, T-cell metabolism and IL2 and IFNG secretion. In Homo sapiens (Human), this protein is Butyrophilin subfamily 1 member A1 (BTN1A1).